The sequence spans 286 residues: ATP synthase gamma chain (286 aa).

The protein belongs to the ATPase gamma chain family. In terms of assembly, F-type ATPases have 2 components, CF(1) - the catalytic core - and CF(0) - the membrane proton channel. CF(1) has five subunits: alpha(3), beta(3), gamma(1), delta(1), epsilon(1). CF(0) has three main subunits: a, b and c.

It is found in the cell inner membrane. Its function is as follows. Produces ATP from ADP in the presence of a proton gradient across the membrane. The gamma chain is believed to be important in regulating ATPase activity and the flow of protons through the CF(0) complex. The chain is ATP synthase gamma chain from Shewanella sp. (strain ANA-3).